We begin with the raw amino-acid sequence, 855 residues long: E3 ubiquitin-protein ligase TRIM71 (855 aa).

At Ala-2 the chain carries N-acetylalanine. The RING-type zinc finger occupies 12-94 (CLLCKEMCGS…ALKLRCPVCD (83 aa)). Low complexity predominate over residues 26-42 (SSNSSASSSSSQTSTSS). Disordered stretches follow at residues 26–48 (SSNSSASSSSSQTSTSSAGGGGP) and 127–177 (EEPP…SPGS). Over residues 135-145 (RAGGGPGGAGG) the composition is skewed to gly residues. A compositionally biased stretch (basic residues) spans 147-157 (SNHRHHAHHPA). The segment at 181 to 228 (RRPHGCSSCDEGNAASSRCLDCQEHLCDNCVRAHQRVRLTKDHYIERG) adopts a B box-type 1; atypical zinc-finger fold. The segment at 260–301 (ERLGFCQHHDDEVLHLYCDTCSVPICRECTLGRHGGHSFAYL) adopts a B box-type 2 zinc-finger fold. Cys-265, His-268, Cys-288, and His-293 together coordinate Zn(2+). Coiled-coil stretches lie at residues 314 to 352 (QLLADAQQGRQALQLSIEQAQTVAEQVEMKAKVVQSEVK) and 378 to 411 (QVKAKSLFLQVEKLRQSLSKLESTISAVQQVLEE). One copy of the Filamin repeat lies at 466–567 (SSGAFAPLTK…IENSPFKVVV (102 aa)). 6 NHL repeats span residues 580–623 (GLSF…FKPC), 627–670 (HHKF…FTFE), 674–717 (LLKF…FGPD), 721–764 (LNKY…IHPD), 768–811 (ARFL…FEAN), and 815–855 (LCKF…ILIF).

It belongs to the TRIM/RBCC family. Interacts (via NHL repeats) with AGO2; the interaction increases in presence of RNA. Interacts with HSP90AA1. Interacts (via NHL repeats) with MOV10, PABPC1, PUM1, PUM2, STAU2, XRN1 and XRN2 in an RNA-dependent manner. Interacts with SHCBP1; leading to enhance its stability. Post-translationally, autoubiquitinated. In terms of tissue distribution, highly expressed in undifferentiated embryonic stem cells (ESCs). Expressed in the epiblast and in interfollicular epidermal stem cells during early development. Also expressed in male germ cells and in the reproductive tract. Highly expressed in neuroepithelial cells, and its expression declines as neurogenesis proceeds (at protein level). Expressed in ependymal cells of the brain.

Its subcellular location is the cytoplasm. It is found in the P-body. It carries out the reaction S-ubiquitinyl-[E2 ubiquitin-conjugating enzyme]-L-cysteine + [acceptor protein]-L-lysine = [E2 ubiquitin-conjugating enzyme]-L-cysteine + N(6)-ubiquitinyl-[acceptor protein]-L-lysine.. It functions in the pathway protein modification; protein ubiquitination. In terms of biological role, E3 ubiquitin-protein ligase that cooperates with the microRNAs (miRNAs) machinery and promotes embryonic stem cells proliferation and maintenance. Binds to miRNAs and associates with AGO2, participating in post-transcriptional repression of transcripts such as CDKN1A. Facilitates the G1-S transition to promote rapid embryonic stem cell self-renewal by repressing CDKN1A expression. In addition, participates in post-transcriptional mRNA repression in a miRNA independent mechanism. Required to maintain proliferation and prevent premature differentiation of neural progenitor cells during early neural development: positively regulates FGF signaling by controlling the stability of SHCBP1. Specific regulator of miRNA biogenesis. miRNA Binds MIR29A hairpin and postranscriptionally modulates MIR29A levels, which indirectly regulates TET proteins expression. The protein is E3 ubiquitin-protein ligase TRIM71 (Trim71) of Mus musculus (Mouse).